A 155-amino-acid polypeptide reads, in one-letter code: Large ribosomal subunit protein eL24 (155 aa).

The segment at 92–155 (AKRNMKPEVR…KAAPRVGGKR (64 aa)) is disordered. The segment covering 96–117 (MKPEVRKAQREQAIKQAKEQKK) has biased composition (basic and acidic residues). Low complexity predominate over residues 124 to 133 (KTTAPPTKGK).

Belongs to the eukaryotic ribosomal protein eL24 family.

In Plutella xylostella (Diamondback moth), this protein is Large ribosomal subunit protein eL24 (RpL24).